The following is a 383-amino-acid chain: MASILALDGLYAEVPKFLPEALREGCAGKNPLSFYIQQILNLMGCDGNEYHVLFTGSSEEANTHMIMAAVRRHLLRTQQRPHVIIGAAEPPSVTECVKALAQEKRCVYTIIPLKNFEIDPVAVYDAIQSNTCLACISGTNAVVKTFNKLQDISKVLKGIPLHSEVSELVYQGCIKQNPPADSFSINSLYGFLGVGVLGMKKKVMQGLGPLIFGGGLRGGSPNIPGIHAMYRTLTQQRPSMKKINTIHKLFMKTLKKHQHVYLPIGGVSAEDTSAENISTKDIPVEGPKELPGYILFSVGRRAEELQKKIFTKFNIKVGRIVDLQEILFRIKIPQKYWETLLFIQLRDNLTKEDIKRVMVVLMHLDTITPRGSLPPPSYSSSFS.

Residues 58 to 59 (SE) and 184 to 186 (SIN) contribute to the pyridoxal 5'-phosphate site.

The protein belongs to the class-V pyridoxal-phosphate-dependent aminotransferase family. NifS/IscS subfamily. It depends on pyridoxal 5'-phosphate as a cofactor.

The protein resides in the virion. The protein is NifS-like protein of African swine fever virus (strain Badajoz 1971 Vero-adapted) (Ba71V).